Consider the following 204-residue polypeptide: Ciliary microtubule inner protein 7 (204 aa).

It is found in the cell projection. The protein localises to the cilium. The protein is Ciliary microtubule inner protein 7 of Homo sapiens (Human).